The following is a 201-amino-acid chain: MQTSPLLTQLMEALRCLPGVGPKSAQRMAFTLLQRDRSGGMRLAQALTRAMSEIGHCADCRTFTEQEKCNICTNPRRQENGQICVVESPADIHAIEQTGQFSGRYFVLMGHLSPLDGIGPDDIGLDRLEQRLAAEPLKEIILATNPTVEGEATANYIAELCAQYGVDASRIAHGVPVGGELEMVDGTTLSHSLAGRHKMTF.

The C4-type zinc finger occupies 57–72; sequence CADCRTFTEQEKCNIC. Residues 81 to 176 enclose the Toprim domain; it reads GQICVVESPA…DASRIAHGVP (96 aa).

The protein belongs to the RecR family.

Functionally, may play a role in DNA repair. It seems to be involved in an RecBC-independent recombinational process of DNA repair. It may act with RecF and RecO. The polypeptide is Recombination protein RecR (Cronobacter sakazakii (strain ATCC BAA-894) (Enterobacter sakazakii)).